A 458-amino-acid chain; its full sequence is ATP synthase subunit beta (458 aa).

Residue 148–155 coordinates ATP; that stretch reads GGAGVGKT.

The protein belongs to the ATPase alpha/beta chains family. As to quaternary structure, F-type ATPases have 2 components, CF(1) - the catalytic core - and CF(0) - the membrane proton channel. CF(1) has five subunits: alpha(3), beta(3), gamma(1), delta(1), epsilon(1). CF(0) has three main subunits: a(1), b(2) and c(9-12). The alpha and beta chains form an alternating ring which encloses part of the gamma chain. CF(1) is attached to CF(0) by a central stalk formed by the gamma and epsilon chains, while a peripheral stalk is formed by the delta and b chains.

It localises to the cell inner membrane. The enzyme catalyses ATP + H2O + 4 H(+)(in) = ADP + phosphate + 5 H(+)(out). In terms of biological role, produces ATP from ADP in the presence of a proton gradient across the membrane. The catalytic sites are hosted primarily by the beta subunits. This Shewanella loihica (strain ATCC BAA-1088 / PV-4) protein is ATP synthase subunit beta.